The chain runs to 336 residues: Lipoyl synthase (336 aa).

[4Fe-4S] cluster is bound by residues Cys81, Cys86, Cys92, Cys107, Cys111, Cys114, and Ser323. Residues 93-312 (FGHGTATFMI…EDYGYELGFS (220 aa)) enclose the Radical SAM core domain.

Belongs to the radical SAM superfamily. Lipoyl synthase family. It depends on [4Fe-4S] cluster as a cofactor.

It is found in the cytoplasm. It catalyses the reaction [[Fe-S] cluster scaffold protein carrying a second [4Fe-4S](2+) cluster] + N(6)-octanoyl-L-lysyl-[protein] + 2 oxidized [2Fe-2S]-[ferredoxin] + 2 S-adenosyl-L-methionine + 4 H(+) = [[Fe-S] cluster scaffold protein] + N(6)-[(R)-dihydrolipoyl]-L-lysyl-[protein] + 4 Fe(3+) + 2 hydrogen sulfide + 2 5'-deoxyadenosine + 2 L-methionine + 2 reduced [2Fe-2S]-[ferredoxin]. Its pathway is protein modification; protein lipoylation via endogenous pathway; protein N(6)-(lipoyl)lysine from octanoyl-[acyl-carrier-protein]: step 2/2. In terms of biological role, catalyzes the radical-mediated insertion of two sulfur atoms into the C-6 and C-8 positions of the octanoyl moiety bound to the lipoyl domains of lipoate-dependent enzymes, thereby converting the octanoylated domains into lipoylated derivatives. This chain is Lipoyl synthase, found in Stenotrophomonas maltophilia (strain R551-3).